Consider the following 555-residue polypeptide: MSTETELQVAVKTSAKKDSRKKGQDRSEATLIKRFKGEGVRYKAKLIGIDEVSAARGDKLCQDSMMKLKGVVAGARSKGEHKQKIFLTISFGGIKIFDEKTGALQHHHAVHEISYIAKDTTDHRAFGYACGKEGNHRFVAIKTAQAAEPVILDLRDLFQLIYELKQREELEKKAQKDKQCEQAVYQTILEEDVEDPVYQYIVFEAGHEPIRDPETEENIYQVPTSQKKEGVYDVPKSQPVSAVTQLELFGDMSTPPDITSPPTPATPGDAFIPSSSQTLPASADVFGSVPFSTAAVPSGYVAMGAVLPSFWGQQPLVQQQMVMGAQPPVAQVMPGAQPIAWGQPGLFPATQQPWPTVAGQFPPAAFMPTQTVMPLPAAMFQGPLTPLATVPGTSDSTRPSPQTDKPRQKMGKETFKDFQMAQPPPVPSRKPDQPSLTCTSEAFSSYFNKVGVAQDTDDCDDFDISQLNLTPVTSTTPSTNSPPTPAPRQSSPSKSSASHASDPTTDDIFEEGFESPSKSEEQEAPDGSQASSNSDPFGEPSGEPSGDNISPQAGS.

The segment at 1 to 26 (MSTETELQVAVKTSAKKDSRKKGQDR) is disordered. Residues 15 to 26 (AKKDSRKKGQDR) are compositionally biased toward basic and acidic residues. The PID domain occupies 36–189 (KGEGVRYKAK…CEQAVYQTIL (154 aa)). Phosphotyrosine occurs at positions 198, 220, and 232. Disordered stretches follow at residues 384-410 (LTPL…RQKM), 418-437 (FQMA…PSLT), and 468-555 (NLTP…QAGS). Over residues 391–403 (PGTSDSTRPSPQT) the composition is skewed to polar residues. 2 stretches are compositionally biased toward low complexity: residues 470–479 (TPVTSTTPST) and 487–501 (PRQS…SHAS). Position 491 is a phosphoserine; by CDK5 (S491). The segment covering 504-513 (TTDDIFEEGF) has biased composition (acidic residues).

In terms of assembly, associates with the SH2 domains of SRC, FYN and ABL. Interacts (phosphorylated on tyrosine residues) with CRK and CRKL (via respective SH2 domain). Interacts with DAB2IP, SIAH1, LRP8 and VLDLR. Interacts with LRP1. Interacts with APLP1 (via NPXY motif). Interacts with DAB2IP. Interacts with ZSWIM8. Post-translationally, phosphorylated by FYN on Tyr-198 and Tyr-220 upon reelin induction in embryonic neurons. Also phosphorylated on Ser-491 independently of reelin signaling. In terms of processing, ubiquitinated by various cullin-5-RING E3 ubiquitin-protein ligase complexes (ECS complexes) following ligand-binding and phosphorylation, leading to its degradation. Ubiquitinated by the ECS(SOCS7) complex in the cortical plate of the developing cerebral cortex following ligand-binding and phosphorylation by FYN, leading to its degradation by the proteasome. Recognized by ZSWIM8 through a disorder targets misorder mechanism that eliminates misfolded DAB1 via ubiquitination and proteasomal degradation.

Its subcellular location is the cytoplasm. In terms of biological role, signaling adapter of the reelin-mediated signaling pathway, which regulates the migration and differentiation of postmitotic neurons during brain development. Mediates intracellular transduction of Reelin signaling following reelin (RELN)-binding to its receptor: acts by docking proteins through its phosphotyrosine residues and PID domain. The sequence is that of Disabled homolog 1 (DAB1) from Macaca fascicularis (Crab-eating macaque).